Consider the following 139-residue polypeptide: Protein Turandot B (139 aa).

The N-terminal stretch at 1 to 21 (MNFKTALICFALLLIGTLCSA) is a signal peptide.

The protein belongs to the Turandot family.

The protein resides in the secreted. In terms of biological role, a humoral factor that may play a role in stress tolerance. The protein is Protein Turandot B of Drosophila sechellia (Fruit fly).